The primary structure comprises 251 residues: Malonyl-[acyl-carrier protein] O-methyltransferase (251 aa).

It belongs to the methyltransferase superfamily.

The catalysed reaction is malonyl-[ACP] + S-adenosyl-L-methionine = malonyl-[ACP] methyl ester + S-adenosyl-L-homocysteine. It participates in cofactor biosynthesis; biotin biosynthesis. Its function is as follows. Converts the free carboxyl group of a malonyl-thioester to its methyl ester by transfer of a methyl group from S-adenosyl-L-methionine (SAM). It allows to synthesize pimeloyl-ACP via the fatty acid synthetic pathway. This is Malonyl-[acyl-carrier protein] O-methyltransferase from Salmonella typhimurium (strain LT2 / SGSC1412 / ATCC 700720).